A 63-amino-acid polypeptide reads, in one-letter code: Prokaryotic ubiquitin-like protein Pup (63 aa).

The disordered stretch occupies residues 1–28; the sequence is MPQEFEQIRSADQPLDSEESAPVAGART. An ARC ATPase binding region spans residues 19 to 57; sequence ESAPVAGARTDDTVDALDAVLDDIESVLETNAEEYVGSF. An Isoglutamyl lysine isopeptide (Glu-Lys) (interchain with K-? in acceptor proteins) cross-link involves residue Glu-63.

This sequence belongs to the prokaryotic ubiquitin-like protein family. As to quaternary structure, strongly interacts with the proteasome-associated ATPase ARC through a hydrophobic interface; the interacting region of Pup lies in its C-terminal half. There is one Pup binding site per ARC hexamer ring.

It functions in the pathway protein degradation; proteasomal Pup-dependent pathway. Its function is as follows. Protein modifier that is covalently attached to lysine residues of substrate proteins, thereby targeting them for proteasomal degradation. The tagging system is termed pupylation. This Bifidobacterium dentium (strain ATCC 27534 / DSM 20436 / JCM 1195 / Bd1) protein is Prokaryotic ubiquitin-like protein Pup.